A 369-amino-acid polypeptide reads, in one-letter code: Peptidyl-prolyl cis-trans isomerase D (369 aa).

Residues 8–173 enclose the PPIase cyclophilin-type domain; the sequence is YFDLSIGGKP…ADVRIDACGI (166 aa). TPR repeat units lie at residues 218-251, 269-302, and 306-339; these read VEAV…LQEY, VAVH…AADD, and AKAL…QPGD.

It belongs to the cyclophilin-type PPIase family. PPIase D subfamily.

The protein localises to the cytoplasm. It catalyses the reaction [protein]-peptidylproline (omega=180) = [protein]-peptidylproline (omega=0). Functionally, PPIases accelerate the folding of proteins. It catalyzes the cis-trans isomerization of proline imidic peptide bonds in oligopeptides. This is Peptidyl-prolyl cis-trans isomerase D (CPR6) from Eremothecium gossypii (strain ATCC 10895 / CBS 109.51 / FGSC 9923 / NRRL Y-1056) (Yeast).